Reading from the N-terminus, the 414-residue chain is Protein IQ-DOMAIN 8 (414 aa).

The short motif at 14–21 (NKKNITDD) is the Nuclear localization signal 1 element. The disordered stretch occupies residues 40 to 61 (LISSSKGFKSRGGSYGTPSLGS). 3 IQ domains span residues 92–120 (REWA…AVVR), 121–143 (IQAI…CMQA), and 144–169 (LVRV…EKPS). The calmodulin-binding stretch occupies residues 119–132 (VRIQAIFRGRQVRK). Disordered stretches follow at residues 156-190 (NRGP…SPGS), 218-244 (HQPR…SCKS), and 262-329 (GRLM…SGSF). Residues 164–184 (ELEKPSDQQKDDPAKQAEKGW) show a composition bias toward basic and acidic residues. Residues 231 to 244 (KQGSVKKNNGSCKS) are compositionally biased toward polar residues. Residues 274–289 (NARKSESSVSEHDTVQ) show a composition bias toward basic and acidic residues. A compositionally biased stretch (low complexity) spans 307–328 (SSSATSSESSSTSQSPVPFSGS). A Nuclear localization signal 2 motif is present at residues 336–343 (YRKPSYMS). Residues 347 to 398 (SIKAKQRRSGSSSSCSKTPFEKKQSMSYNGDVNVRRSAGSDPLNNQWTDLYP) are disordered.

It belongs to the IQD family. Binds to multiple calmodulin (CaM) in the presence of Ca(2+) and CaM-like proteins.

The protein resides in the nucleus. Its subcellular location is the cytoplasm. It localises to the cytoskeleton. The protein localises to the nucleus envelope. Functionally, may be involved in cooperative interactions with calmodulins or calmodulin-like proteins. Recruits calmodulin proteins to microtubules, thus being a potential scaffold in cellular signaling and trafficking. May associate with nucleic acids and regulate gene expression at the transcriptional or post-transcriptional level. This chain is Protein IQ-DOMAIN 8, found in Arabidopsis thaliana (Mouse-ear cress).